Here is a 436-residue protein sequence, read N- to C-terminus: GTPase Der (436 aa).

EngA-type G domains lie at 4–167 (PVVA…PEVE) and 174–350 (VRVA…EQRT). Residues 10-17 (GRPNVGKS), 57-61 (DTGGL), 120-123 (NKVD), 180-187 (GRPNVGKS), 227-231 (DTAGL), and 292-295 (NKWD) each bind GTP. Positions 351-435 (RRISTSEVND…PLRIILRRKN (85 aa)) constitute a KH-like domain.

This sequence belongs to the TRAFAC class TrmE-Era-EngA-EngB-Septin-like GTPase superfamily. EngA (Der) GTPase family. As to quaternary structure, associates with the 50S ribosomal subunit.

Functionally, GTPase that plays an essential role in the late steps of ribosome biogenesis. This is GTPase Der from Gemmatimonas aurantiaca (strain DSM 14586 / JCM 11422 / NBRC 100505 / T-27).